The primary structure comprises 138 residues: Cysteine desulfuration protein SufE (138 aa).

Residue cysteine 51 is the Cysteine persulfide intermediate of the active site.

This sequence belongs to the SufE family. In terms of assembly, homodimer. Interacts with SufS.

Its subcellular location is the cytoplasm. Its pathway is cofactor biosynthesis; iron-sulfur cluster biosynthesis. Functionally, participates in cysteine desulfuration mediated by SufS. Cysteine desulfuration mobilizes sulfur from L-cysteine to yield L-alanine and constitutes an essential step in sulfur metabolism for biosynthesis of a variety of sulfur-containing biomolecules. Functions as a sulfur acceptor for SufS, by mediating the direct transfer of the sulfur atom from the S-sulfanylcysteine of SufS, an intermediate product of cysteine desulfuration process. The protein is Cysteine desulfuration protein SufE of Photorhabdus laumondii subsp. laumondii (strain DSM 15139 / CIP 105565 / TT01) (Photorhabdus luminescens subsp. laumondii).